Reading from the N-terminus, the 284-residue chain is Asialoglycoprotein receptor 1 (284 aa).

Residues 1 to 18 show a composition bias toward basic and acidic residues; that stretch reads MTKDYQDFQHLDNDNDHH. The interval 1 to 25 is disordered; sequence MTKDYQDFQHLDNDNDHHQLRRGPP. The Cytoplasmic segment spans residues 1 to 39; sequence MTKDYQDFQHLDNDNDHHQLRRGPPPTPRLLQRLCSGSR. The Endocytosis signal signature appears at 5-8; that stretch reads YQDF. Residue Cys-35 is the site of S-palmitoyl cysteine attachment. Residues 40-60 traverse the membrane as a helical; Signal-anchor for type II membrane protein segment; sequence LLLLSSSLSILLLVVVCVITS. Positions 59 to 117 form a coiled coil; sequence TSQNSQLREDLLALRQNFSNLTVSTEDQVKALSTQGSSVGRKMKLVESKLEKQQKDLTE. The Extracellular segment spans residues 61–284; it reads QNSQLREDLL…VCETKLDKAN (224 aa). Asn-75, Asn-78, and Asn-146 each carry an N-linked (GlcNAc...) asparagine glycan. 3 cysteine pairs are disulfide-bonded: Cys-153–Cys-164, Cys-181–Cys-276, and Cys-254–Cys-268. Residues 160 to 277 form the C-type lectin domain; the sequence is YEGSCYWFSS…CRRPYRWVCE (118 aa). Val-190, Glu-196, Asp-215, Gln-239, Asp-241, Glu-252, Asp-253, Asn-264, Asp-265, and Glu-277 together coordinate Ca(2+).

In terms of assembly, interacts with LASS2. Post-translationally, phosphorylated on a cytoplasmic Ser residue. As to expression, expressed exclusively in hepatic parenchymal cells.

The protein localises to the membrane. In terms of biological role, mediates the endocytosis of plasma glycoproteins to which the terminal sialic acid residue on their complex carbohydrate moieties has been removed. The receptor recognizes terminal galactose and N-acetylgalactosamine units. After ligand binding to the receptor, the resulting complex is internalized and transported to a sorting organelle, where receptor and ligand are disassociated. The receptor then returns to the cell membrane surface. This Mus musculus (Mouse) protein is Asialoglycoprotein receptor 1 (Asgr1).